A 115-amino-acid chain; its full sequence is Phosphoribosyl-ATP pyrophosphatase (115 aa).

Belongs to the PRA-PH family.

The protein resides in the cytoplasm. The catalysed reaction is 1-(5-phospho-beta-D-ribosyl)-ATP + H2O = 1-(5-phospho-beta-D-ribosyl)-5'-AMP + diphosphate + H(+). Its pathway is amino-acid biosynthesis; L-histidine biosynthesis; L-histidine from 5-phospho-alpha-D-ribose 1-diphosphate: step 2/9. The chain is Phosphoribosyl-ATP pyrophosphatase from Bordetella parapertussis (strain 12822 / ATCC BAA-587 / NCTC 13253).